A 178-amino-acid polypeptide reads, in one-letter code: Crossover junction endodeoxyribonuclease RuvC (178 aa).

Residues D11, E71, and D143 contribute to the active site. Positions 11, 71, and 143 each coordinate Mg(2+).

This sequence belongs to the RuvC family. Homodimer which binds Holliday junction (HJ) DNA. The HJ becomes 2-fold symmetrical on binding to RuvC with unstacked arms; it has a different conformation from HJ DNA in complex with RuvA. In the full resolvosome a probable DNA-RuvA(4)-RuvB(12)-RuvC(2) complex forms which resolves the HJ. Mg(2+) serves as cofactor.

The protein localises to the cytoplasm. The enzyme catalyses Endonucleolytic cleavage at a junction such as a reciprocal single-stranded crossover between two homologous DNA duplexes (Holliday junction).. Functionally, the RuvA-RuvB-RuvC complex processes Holliday junction (HJ) DNA during genetic recombination and DNA repair. Endonuclease that resolves HJ intermediates. Cleaves cruciform DNA by making single-stranded nicks across the HJ at symmetrical positions within the homologous arms, yielding a 5'-phosphate and a 3'-hydroxyl group; requires a central core of homology in the junction. The consensus cleavage sequence is 5'-(A/T)TT(C/G)-3'. Cleavage occurs on the 3'-side of the TT dinucleotide at the point of strand exchange. HJ branch migration catalyzed by RuvA-RuvB allows RuvC to scan DNA until it finds its consensus sequence, where it cleaves and resolves the cruciform DNA. In Neisseria meningitidis serogroup B (strain ATCC BAA-335 / MC58), this protein is Crossover junction endodeoxyribonuclease RuvC.